A 168-amino-acid chain; its full sequence is SPbeta prophage-derived uncharacterized protein YomW (168 aa).

The chain is SPbeta prophage-derived uncharacterized protein YomW (yomW) from Bacillus subtilis (strain 168).